The sequence spans 346 residues: Phosphoribosylformylglycinamidine cyclo-ligase (346 aa).

The protein belongs to the AIR synthase family.

It is found in the cytoplasm. It carries out the reaction 2-formamido-N(1)-(5-O-phospho-beta-D-ribosyl)acetamidine + ATP = 5-amino-1-(5-phospho-beta-D-ribosyl)imidazole + ADP + phosphate + H(+). The protein operates within purine metabolism; IMP biosynthesis via de novo pathway; 5-amino-1-(5-phospho-D-ribosyl)imidazole from N(2)-formyl-N(1)-(5-phospho-D-ribosyl)glycinamide: step 2/2. In Shewanella halifaxensis (strain HAW-EB4), this protein is Phosphoribosylformylglycinamidine cyclo-ligase.